We begin with the raw amino-acid sequence, 349 residues long: Ribosomal RNA large subunit methyltransferase Cfr (349 aa).

Catalysis depends on Glu89, which acts as the Proton acceptor. A Radical SAM core domain is found at 96 to 331; that stretch reads KAGWESFCIS…VTVRSQFGID (236 aa). Cysteines 103 and 336 form a disulfide. [4Fe-4S] cluster is bound by residues Cys110, Cys114, and Cys117. Residues 156–157, Ser187, 210–212, and Asn291 each bind S-adenosyl-L-methionine; these read GE and SLH. Cys336 functions as the S-methylcysteine intermediate in the catalytic mechanism.

Belongs to the radical SAM superfamily. RlmN family. Cfr subfamily. The cofactor is [4Fe-4S] cluster.

The protein resides in the cytoplasm. The enzyme catalyses adenosine(2503) in 23S rRNA + 2 reduced [2Fe-2S]-[ferredoxin] + 2 S-adenosyl-L-methionine = 8-methyladenosine(2503) in 23S rRNA + 5'-deoxyadenosine + L-methionine + 2 oxidized [2Fe-2S]-[ferredoxin] + S-adenosyl-L-homocysteine. Specifically methylates position 8 of adenine 2503 in 23S rRNA. Confers resistance to some classes of antibiotics. This chain is Ribosomal RNA large subunit methyltransferase Cfr, found in Bacillus velezensis (strain DSM 23117 / BGSC 10A6 / LMG 26770 / FZB42) (Bacillus amyloliquefaciens subsp. plantarum).